The following is a 354-amino-acid chain: Membrane progestin receptor beta (354 aa).

Over 1 to 76 (MTTAILERLS…FSLFQKHNEV (76 aa)) the chain is Cytoplasmic. The helical transmembrane segment at 77-97 (VNVWTHLLAALAVLLRFWAFV) threads the bilayer. Residues 98 to 111 (EAGALQWASPHTLP) are Extracellular-facing. The chain crosses the membrane as a helical span at residues 112–132 (LLLFILSSITYLTCSLLAHLL). Over 133–173 (QSKSELSHYTFYFVDYVGVSVYQYGSALAHFFYSSDQAWYE) the chain is Cytoplasmic. Residues 174-194 (LFWIFFLPAAAFCGWLSCAGC) form a helical membrane-spanning segment. Over 195–213 (CYAKYRYRRPYPVMRKICQ) the chain is Extracellular. A helical membrane pass occupies residues 214 to 234 (VVPAGLAFVLDISPVAHRVAL). Topologically, residues 235-243 (CHLAGCQEQ) are cytoplasmic. Residues 244-264 (AAWYHTLQILFFLVSAYFFSC) traverse the membrane as a helical segment. The Extracellular segment spans residues 265–283 (PVPEKYFPGSCDIVGHGHQ). A helical transmembrane segment spans residues 284–304 (IFHAFLSVCTLSQLEAILLDY). The Cytoplasmic portion of the chain corresponds to 305–315 (QGRHEIFLQRH). Residues 316 to 336 (GPLSVYSACLSFFVLAACSAA) traverse the membrane as a helical segment. The Extracellular portion of the chain corresponds to 337-354 (TATLLRHKVKDRLIKKDS).

Belongs to the ADIPOR family. As to expression, expressed in brain and testis.

It is found in the cell membrane. In terms of biological role, plasma membrane progesterone (P4) receptor coupled to G proteins. Seems to act through a G(i) mediated pathway. May be involved in oocyte maturation. Also binds dehydroepiandrosterone (DHEA), pregnanolone, pregnenolone and allopregnanolone. The polypeptide is Membrane progestin receptor beta (Mus musculus (Mouse)).